An 88-amino-acid chain; its full sequence is Small ribosomal subunit protein bS20 (88 aa).

Basic residues predominate over residues 1–10; it reads MANHKSSLKR. Residues 1 to 24 form a disordered region; sequence MANHKSSLKRAKQDIVRNTRNKSR.

Belongs to the bacterial ribosomal protein bS20 family.

Functionally, binds directly to 16S ribosomal RNA. The sequence is that of Small ribosomal subunit protein bS20 from Desulfosudis oleivorans (strain DSM 6200 / JCM 39069 / Hxd3) (Desulfococcus oleovorans).